The following is a 411-amino-acid chain: Tyrosine--tRNA ligase (411 aa).

Position 33 (Y33) interacts with L-tyrosine. Residues 38–47 (PTADSLHLGN) carry the 'HIGH' region motif. Residues Y160 and Q164 each contribute to the L-tyrosine site. The 'KMSKS' region motif lies at 222-226 (KFGKS). An ATP-binding site is contributed by K225. The region spanning 346–410 (VNLVNFLVEN…GKKKILICKV (65 aa)) is the S4 RNA-binding domain.

This sequence belongs to the class-I aminoacyl-tRNA synthetase family. TyrS type 1 subfamily. In terms of assembly, homodimer.

Its subcellular location is the cytoplasm. The enzyme catalyses tRNA(Tyr) + L-tyrosine + ATP = L-tyrosyl-tRNA(Tyr) + AMP + diphosphate + H(+). Catalyzes the attachment of tyrosine to tRNA(Tyr) in a two-step reaction: tyrosine is first activated by ATP to form Tyr-AMP and then transferred to the acceptor end of tRNA(Tyr). The sequence is that of Tyrosine--tRNA ligase from Mycoplasmopsis synoviae (strain 53) (Mycoplasma synoviae).